The primary structure comprises 374 residues: Multicilin (374 aa).

2 disordered regions span residues 18 to 72 and 84 to 105; these read CPNR…ALPA and CSSF…QSHS. Residues 168 to 216 adopt a coiled-coil conformation; it reads EQYWKEVADQNQRALGDALIENNQLHATLTQKQEEIASLKERNLQLKEL. Residues 284-306 form a disordered region; that stretch reads LQSRDPKRLRLQPEPQSLDRRPG.

This sequence belongs to the geminin family. In terms of assembly, heterodimer (via coiled-coil domain) with GMNN (via coiled-coil domain); targets GMNN to the nucleus. Can form homodimers (in vitro, via coiled-coil domain), but these are much less stable than the heterodimer formed with GMNN.

The protein localises to the nucleus. Functionally, transcription regulator specifically required for multiciliate cell differentiation. Acts in a multiprotein complex containing E2F4 and E2F5 that binds and activates genes required for centriole biogenesis. Required for the deuterosome-mediated acentriolar pathway. Plays a role in mitotic cell cycle progression by promoting cell cycle exit. Modulates GMNN activity by reducing its affinity for CDT1. This is Multicilin (MCIDAS) from Bos taurus (Bovine).